Here is a 319-residue protein sequence, read N- to C-terminus: Lipoyl synthase (319 aa).

The tract at residues 5 to 31 (LDTISANPVRPRHPEKANRPDALSPPK) is disordered. The [4Fe-4S] cluster site is built by C61, C66, C72, C87, C91, C94, and S300. Residues 73 to 289 (WDKKHATFMI…ETVAYTKGFL (217 aa)) enclose the Radical SAM core domain.

Belongs to the radical SAM superfamily. Lipoyl synthase family. Requires [4Fe-4S] cluster as cofactor.

The protein localises to the cytoplasm. It carries out the reaction [[Fe-S] cluster scaffold protein carrying a second [4Fe-4S](2+) cluster] + N(6)-octanoyl-L-lysyl-[protein] + 2 oxidized [2Fe-2S]-[ferredoxin] + 2 S-adenosyl-L-methionine + 4 H(+) = [[Fe-S] cluster scaffold protein] + N(6)-[(R)-dihydrolipoyl]-L-lysyl-[protein] + 4 Fe(3+) + 2 hydrogen sulfide + 2 5'-deoxyadenosine + 2 L-methionine + 2 reduced [2Fe-2S]-[ferredoxin]. The protein operates within protein modification; protein lipoylation via endogenous pathway; protein N(6)-(lipoyl)lysine from octanoyl-[acyl-carrier-protein]: step 2/2. Catalyzes the radical-mediated insertion of two sulfur atoms into the C-6 and C-8 positions of the octanoyl moiety bound to the lipoyl domains of lipoate-dependent enzymes, thereby converting the octanoylated domains into lipoylated derivatives. The chain is Lipoyl synthase from Nitrobacter winogradskyi (strain ATCC 25391 / DSM 10237 / CIP 104748 / NCIMB 11846 / Nb-255).